Reading from the N-terminus, the 100-residue chain is Nucleoid-associated protein RoseRS_1534 (100 aa).

The protein belongs to the YbaB/EbfC family. In terms of assembly, homodimer.

The protein localises to the cytoplasm. Its subcellular location is the nucleoid. In terms of biological role, binds to DNA and alters its conformation. May be involved in regulation of gene expression, nucleoid organization and DNA protection. This chain is Nucleoid-associated protein RoseRS_1534, found in Roseiflexus sp. (strain RS-1).